Consider the following 317-residue polypeptide: Multivesicular body subunit 12B (317 aa).

The disordered stretch occupies residues M1 to T49. A compositionally biased stretch (pro residues) spans P13–Q22. The region spanning M45–R191 is the MABP domain. Position 99 is a phosphoserine (S99). A phosphothreonine mark is found at T120, T202, and T203. A disordered region spans residues P193–P218. The segment covering S198–A214 has biased composition (low complexity). Residue S222 is modified to Phosphoserine. One can recognise a UMA domain in the interval M252–A301. Residues E297–S317 form a disordered region. At S307 the chain carries Phosphoserine.

This sequence belongs to the MVB12 family. In terms of assembly, component of the ESCRT-I complex (endosomal sorting complex required for transport I) which consists of TSG101, VPS28, a VPS37 protein (VPS37A to -D) and MVB12A or MVB12B in a 1:1:1:1 stoichiometry. Interacts with TSG101; the association appears to be mediated by the TSG101-VPS37 binary subcomplex. Interacts with VPS28. Interacts with VPS37B; the association appears to be mediated by the TSG101-VPS37 binary subcomplex. Interacts with VPS37C; the association appears to be mediated by the TSG101-VPS37 binary subcomplex.

It localises to the endosome. Its subcellular location is the late endosome membrane. Its function is as follows. Component of the ESCRT-I complex, a regulator of vesicular trafficking process. Required for the sorting of endocytic ubiquitinated cargos into multivesicular bodies. This is Multivesicular body subunit 12B (Mvb12b) from Mus musculus (Mouse).